A 645-amino-acid chain; its full sequence is Glucans biosynthesis glucosyltransferase H (645 aa).

Positions 1–12 are enriched in polar residues; sequence MDGTVTLSSTPT. The disordered stretch occupies residues 1-22; the sequence is MDGTVTLSSTPTAIPPVSALDA. The next 7 membrane-spanning stretches (helical) occupy residues 64 to 84, 98 to 118, 423 to 443, 465 to 485, 504 to 524, 559 to 579, and 580 to 600; these read LIGGTFAATAVAVWVMLSVLW, LFTLLFAWIAMSFASAVAGFV, APMWGLLMLIGIGIPLAGVGI, AIWIFICTMFVLLAPKLLGYI, AVSILLETVLAALMAPVVMYL, YGGLTVFGLFMGAVAYAVSPA, and LAAWMGPVIVGMALSIPVVAL.

The protein belongs to the glycosyltransferase 2 family. OpgH subfamily.

The protein resides in the cell inner membrane. The protein operates within glycan metabolism; osmoregulated periplasmic glucan (OPG) biosynthesis. In terms of biological role, involved in the biosynthesis of osmoregulated periplasmic glucans (OPGs). The polypeptide is Glucans biosynthesis glucosyltransferase H (Xanthomonas oryzae pv. oryzae (strain MAFF 311018)).